The primary structure comprises 1193 residues: Dynamin-like protein A (1193 aa).

Residues 1-609 (MTDQNRKELL…AFRERVKRLE (609 aa)) form a D1, associates with and fuses membranes, tethers lipsomes region. Positions 50 to 57 (GHYSAGKS) are G1 motif D1. Positions 76–78 (TSA) are G2 motif D1. A G3 motif D1 region spans residues 141 to 144 (DTPG). Residues 199–202 (NQID) are G4 motif D1. A D2, does not associate with membranes region spans residues 561-1193 (MPKSEIKMEQ…WKNSDNTIKM (633 aa)). Residues 619-626 (GGFSSGKS) are G1 motif D2. The tract at residues 645–647 (TTA) is G2 motif D2. The interval 774–777 (DTPG) is G3 motif D2. The G4 motif D2 stretch occupies residues 837-840 (NAAD).

It belongs to the TRAFAC class dynamin-like GTPase superfamily. Dynamin/Fzo/YdjA family. As to quaternary structure, homodimer in solution. Both D1 and D2 domains interact with YwpG, YneK interacts only with D1 while RNase Y (rny) only interacts with whole protein. Probably oligomerizes at damaged membrane sites. It depends on Mg(2+) as a cofactor.

It is found in the cell membrane. The enzyme catalyses GTP + H2O = GDP + phosphate + H(+). Its function is as follows. Mediates lipid mixing of vesicles and full mixing of their contents in the absence and presence of GTP. Tethers and mixes small vesicles better than larger ones, indicating a curvature preference. GTP slows down DynA-mediated lipid fusion, perhaps controlling its activity. Prefers phospholipid composition close to the B.subtilis membrane; requires phosphatidylglycerol for fusion has no activity on pure phosphatidylethanolamine vesicles. Regulates membrane lipid diffusion. Required to prevent membrane damage when exposed to low levels of membrane-damaging antibiotics or to bacteriophage. Probably surveys the cell membrane for stress; localizes to sites of membrane damage (treatment with nisin) and forms foci in cells treated with pore-forming compounds (CCCP). May assist membrane repair, possibly by membrane tethering and fusion. Probably functions both in early and late cell division, affects the proper formation of the FtsZ ring. Plays a non-redundant role with flottilin (floT) in membrane dynamics and cell shape. Probably able to bend membranes. Tethers liposomes and mediates their fusion; this does not require GTPase activity or the presence of GTP. Both GTPase domains (dynamin-type G) are required for GTPase activity. Functionally, has intrinsic affinity for membranes and membrane distortion capability; causes tubulation and membrane distortion when expressed in a Drosophila cell line. This Bacillus subtilis (strain 168) protein is Dynamin-like protein A.